A 704-amino-acid chain; its full sequence is Elongation factor G (704 aa).

The tr-type G domain occupies 8–290 (ARYRNIGISA…AVIDYLPSPV (283 aa)). Residues 17–24 (AHIDAGKT), 88–92 (DTPGH), and 142–145 (NKMD) contribute to the GTP site.

The protein belongs to the TRAFAC class translation factor GTPase superfamily. Classic translation factor GTPase family. EF-G/EF-2 subfamily.

Its subcellular location is the cytoplasm. In terms of biological role, catalyzes the GTP-dependent ribosomal translocation step during translation elongation. During this step, the ribosome changes from the pre-translocational (PRE) to the post-translocational (POST) state as the newly formed A-site-bound peptidyl-tRNA and P-site-bound deacylated tRNA move to the P and E sites, respectively. Catalyzes the coordinated movement of the two tRNA molecules, the mRNA and conformational changes in the ribosome. The protein is Elongation factor G of Salmonella arizonae (strain ATCC BAA-731 / CDC346-86 / RSK2980).